A 314-amino-acid chain; its full sequence is Lipoyl synthase (314 aa).

Residues Cys40, Cys45, Cys51, Cys67, Cys71, Cys74, and Ser280 each coordinate [4Fe-4S] cluster. Residues 53 to 269 (SERKTATFMI…KNIALEKGFS (217 aa)) form the Radical SAM core domain.

Belongs to the radical SAM superfamily. Lipoyl synthase family. [4Fe-4S] cluster is required as a cofactor.

It localises to the cytoplasm. It carries out the reaction [[Fe-S] cluster scaffold protein carrying a second [4Fe-4S](2+) cluster] + N(6)-octanoyl-L-lysyl-[protein] + 2 oxidized [2Fe-2S]-[ferredoxin] + 2 S-adenosyl-L-methionine + 4 H(+) = [[Fe-S] cluster scaffold protein] + N(6)-[(R)-dihydrolipoyl]-L-lysyl-[protein] + 4 Fe(3+) + 2 hydrogen sulfide + 2 5'-deoxyadenosine + 2 L-methionine + 2 reduced [2Fe-2S]-[ferredoxin]. It functions in the pathway protein modification; protein lipoylation via endogenous pathway; protein N(6)-(lipoyl)lysine from octanoyl-[acyl-carrier-protein]. Catalyzes the radical-mediated insertion of two sulfur atoms into the C-6 and C-8 positions of the octanoyl moiety bound to the lipoyl domains of lipoate-dependent enzymes, thereby converting the octanoylated domains into lipoylated derivatives. The polypeptide is Lipoyl synthase (Oceanobacillus iheyensis (strain DSM 14371 / CIP 107618 / JCM 11309 / KCTC 3954 / HTE831)).